A 217-amino-acid chain; its full sequence is 3,4-dihydroxy-2-butanone 4-phosphate synthase (217 aa).

Residues 37–38 (RE), D42, 150–154 (RGGHT), and E174 each bind D-ribulose 5-phosphate. Mg(2+) is bound at residue E38. H153 serves as a coordination point for Mg(2+).

Belongs to the DHBP synthase family. In terms of assembly, homodimer. Mg(2+) serves as cofactor. Mn(2+) is required as a cofactor.

The catalysed reaction is D-ribulose 5-phosphate = (2S)-2-hydroxy-3-oxobutyl phosphate + formate + H(+). It functions in the pathway cofactor biosynthesis; riboflavin biosynthesis; 2-hydroxy-3-oxobutyl phosphate from D-ribulose 5-phosphate: step 1/1. Its function is as follows. Catalyzes the conversion of D-ribulose 5-phosphate to formate and 3,4-dihydroxy-2-butanone 4-phosphate. This chain is 3,4-dihydroxy-2-butanone 4-phosphate synthase, found in Escherichia fergusonii (strain ATCC 35469 / DSM 13698 / CCUG 18766 / IAM 14443 / JCM 21226 / LMG 7866 / NBRC 102419 / NCTC 12128 / CDC 0568-73).